The primary structure comprises 557 residues: Formate--tetrahydrofolate ligase (557 aa).

65 to 72 (TPAGEGKT) is a binding site for ATP.

This sequence belongs to the formate--tetrahydrofolate ligase family.

The enzyme catalyses (6S)-5,6,7,8-tetrahydrofolate + formate + ATP = (6R)-10-formyltetrahydrofolate + ADP + phosphate. It participates in one-carbon metabolism; tetrahydrofolate interconversion. The chain is Formate--tetrahydrofolate ligase from Zymomonas mobilis subsp. mobilis (strain ATCC 31821 / ZM4 / CP4).